Here is a 126-residue protein sequence, read N- to C-terminus: Large ribosomal subunit protein bL12 (126 aa).

The protein belongs to the bacterial ribosomal protein bL12 family. As to quaternary structure, homodimer. Part of the ribosomal stalk of the 50S ribosomal subunit. Forms a multimeric L10(L12)X complex, where L10 forms an elongated spine to which 2 to 4 L12 dimers bind in a sequential fashion. Binds GTP-bound translation factors.

Forms part of the ribosomal stalk which helps the ribosome interact with GTP-bound translation factors. Is thus essential for accurate translation. The sequence is that of Large ribosomal subunit protein bL12 from Geotalea daltonii (strain DSM 22248 / JCM 15807 / FRC-32) (Geobacter daltonii).